The chain runs to 306 residues: Protein FdhE homolog (306 aa).

This sequence belongs to the FdhE family.

The protein localises to the cytoplasm. Its function is as follows. Necessary for formate dehydrogenase activity. In Glaesserella parasuis serovar 5 (strain SH0165) (Haemophilus parasuis), this protein is Protein FdhE homolog.